The primary structure comprises 414 residues: MRLSLPRLKMPRLPGFSILVWISTALKGWVMGSREKDTDSLIMYDRTLLWLTFGLAAIGFIMVTSASMPIGQRLTNDPFFFAKRDGVYLILAFILAIITLRLPMEFWQRYSATMLLGSIILLMIVLVVGSSVKGASRWIDLGLLRIQPAELTKLSLFCYIANYLVRKGDEVRNNLRGFLKPMGVILVLAVLLLAQPDLGTVVVLFVTTLAMLFLAGAKLWQFIAIIGMGISAVVLLILAEPYRIRRVTAFWNPWEDPFGSGYQLTQSLMAFGRGELWGQGLGNSVQKLEYLPEAHTDFIFAIIGEELGYVGVVLALLMVFFVAFRAMSIGRKALEIDHRFSGFLACSIGIWFSFQALVNVGAAAGMLPTKGLTLPLISYGGSSLLIMSTAIMMLLRIDYETRLEKAQAFVRGSR.

Residues 1-12 (MRLSLPRLKMPR) lie on the Cytoplasmic side of the membrane. The helical transmembrane segment at 13 to 33 (LPGFSILVWISTALKGWVMGS) threads the bilayer. At 34-47 (REKDTDSLIMYDRT) the chain is on the periplasmic side. The helical transmembrane segment at 48–68 (LLWLTFGLAAIGFIMVTSASM) threads the bilayer. Residues 69-86 (PIGQRLTNDPFFFAKRDG) are Cytoplasmic-facing. A helical membrane pass occupies residues 87–107 (VYLILAFILAIITLRLPMEFW). The Periplasmic segment spans residues 108–111 (QRYS). A helical transmembrane segment spans residues 112-132 (ATMLLGSIILLMIVLVVGSSV). At 133–174 (KGASRWIDLGLLRIQPAELTKLSLFCYIANYLVRKGDEVRNN) the chain is on the cytoplasmic side. A helical transmembrane segment spans residues 175 to 194 (LRGFLKPMGVILVLAVLLLA). At 195–197 (QPD) the chain is on the periplasmic side. The chain crosses the membrane as a helical span at residues 198 to 217 (LGTVVVLFVTTLAMLFLAGA). A topological domain (cytoplasmic) is located at residue K218. A helical transmembrane segment spans residues 219–239 (LWQFIAIIGMGISAVVLLILA). Topologically, residues 240–301 (EPYRIRRVTA…PEAHTDFIFA (62 aa)) are periplasmic. Residues 302 to 322 (IIGEELGYVGVVLALLMVFFV) form a helical membrane-spanning segment. The Cytoplasmic portion of the chain corresponds to 323–342 (AFRAMSIGRKALEIDHRFSG). A helical membrane pass occupies residues 343–363 (FLACSIGIWFSFQALVNVGAA). Topologically, residues 364 to 373 (AGMLPTKGLT) are periplasmic. Residues 374–394 (LPLISYGGSSLLIMSTAIMML) form a helical membrane-spanning segment. Residues 395-414 (LRIDYETRLEKAQAFVRGSR) lie on the Cytoplasmic side of the membrane.

The protein belongs to the SEDS family. FtsW subfamily.

It localises to the cell inner membrane. The enzyme catalyses [GlcNAc-(1-&gt;4)-Mur2Ac(oyl-L-Ala-gamma-D-Glu-L-Lys-D-Ala-D-Ala)](n)-di-trans,octa-cis-undecaprenyl diphosphate + beta-D-GlcNAc-(1-&gt;4)-Mur2Ac(oyl-L-Ala-gamma-D-Glu-L-Lys-D-Ala-D-Ala)-di-trans,octa-cis-undecaprenyl diphosphate = [GlcNAc-(1-&gt;4)-Mur2Ac(oyl-L-Ala-gamma-D-Glu-L-Lys-D-Ala-D-Ala)](n+1)-di-trans,octa-cis-undecaprenyl diphosphate + di-trans,octa-cis-undecaprenyl diphosphate + H(+). Its pathway is cell wall biogenesis; peptidoglycan biosynthesis. Peptidoglycan polymerase that is essential for cell division. The chain is Probable peptidoglycan glycosyltransferase FtsW from Escherichia coli O157:H7.